We begin with the raw amino-acid sequence, 286 residues long: NAD kinase (286 aa).

The Proton acceptor role is filled by Asp-66. NAD(+)-binding positions include 66 to 67 (DG), 137 to 138 (ND), Arg-148, Arg-165, Asp-167, and 178 to 183 (TAYSMS).

It belongs to the NAD kinase family. Requires a divalent metal cation as cofactor.

It is found in the cytoplasm. It catalyses the reaction NAD(+) + ATP = ADP + NADP(+) + H(+). Its function is as follows. Involved in the regulation of the intracellular balance of NAD and NADP, and is a key enzyme in the biosynthesis of NADP. Catalyzes specifically the phosphorylation on 2'-hydroxyl of the adenosine moiety of NAD to yield NADP. The chain is NAD kinase from Chlorobium chlorochromatii (strain CaD3).